Here is a 211-residue protein sequence, read N- to C-terminus: Large ribosomal subunit protein uL3 (211 aa).

Gln-150 is subject to N5-methylglutamine.

This sequence belongs to the universal ribosomal protein uL3 family. In terms of assembly, part of the 50S ribosomal subunit. Forms a cluster with proteins L14 and L19. Methylated by PrmB.

One of the primary rRNA binding proteins, it binds directly near the 3'-end of the 23S rRNA, where it nucleates assembly of the 50S subunit. This chain is Large ribosomal subunit protein uL3, found in Pseudomonas syringae pv. syringae (strain B728a).